A 219-amino-acid chain; its full sequence is Lipoprotein-releasing system ATP-binding protein LolD (219 aa).

The 215-residue stretch at 5–219 (LKAGDIFKTY…KVVMQDGVII (215 aa)) folds into the ABC transporter domain. Residue 37 to 44 (GASGAGKS) coordinates ATP.

Belongs to the ABC transporter superfamily. Lipoprotein translocase (TC 3.A.1.125) family. As to quaternary structure, the complex is composed of two ATP-binding proteins (LolD) and two transmembrane proteins (LolC and LolE).

Its subcellular location is the cell inner membrane. In terms of biological role, part of the ABC transporter complex LolCDE involved in the translocation of mature outer membrane-directed lipoproteins, from the inner membrane to the periplasmic chaperone, LolA. Responsible for the formation of the LolA-lipoprotein complex in an ATP-dependent manner. In Cytophaga hutchinsonii (strain ATCC 33406 / DSM 1761 / CIP 103989 / NBRC 15051 / NCIMB 9469 / D465), this protein is Lipoprotein-releasing system ATP-binding protein LolD.